Reading from the N-terminus, the 227-residue chain is Orotidine 5'-phosphate decarboxylase (227 aa).

Residues Asp-8, Lys-30, Asp-59 to Thr-68, Thr-118, Arg-178, Gln-187, Gly-207, and Arg-208 each bind substrate. Lys-61 acts as the Proton donor in catalysis.

This sequence belongs to the OMP decarboxylase family. Type 1 subfamily. Homodimer.

It catalyses the reaction orotidine 5'-phosphate + H(+) = UMP + CO2. Its pathway is pyrimidine metabolism; UMP biosynthesis via de novo pathway; UMP from orotate: step 2/2. Functionally, catalyzes the decarboxylation of orotidine 5'-monophosphate (OMP) to uridine 5'-monophosphate (UMP). This chain is Orotidine 5'-phosphate decarboxylase, found in Nitratiruptor sp. (strain SB155-2).